A 117-amino-acid chain; its full sequence is Photosystem II reaction center Psb28 protein (117 aa).

Belongs to the Psb28 family. Part of the photosystem II complex.

Its subcellular location is the cellular thylakoid membrane. In Prochlorococcus marinus (strain MIT 9211), this protein is Photosystem II reaction center Psb28 protein.